A 663-amino-acid polypeptide reads, in one-letter code: Protein MNE1 (663 aa).

The protein is Protein MNE1 (MNE1) of Saccharomyces cerevisiae (strain ATCC 204508 / S288c) (Baker's yeast).